A 330-amino-acid polypeptide reads, in one-letter code: Cytoplasmic envelopment protein 2 (330 aa).

This sequence belongs to the herpesviridae cytoplasmic envelopment protein 2 family. Interacts with cytoplasmic envelopment protein 3 and with the capsid.

It is found in the virion tegument. Its subcellular location is the host cytoplasm. It localises to the host nucleus. Plays a critical role in cytoplasmic virus egress. Participates in the final step of tegumentation and envelope acquisition within the host cytoplasm by directly interacting with the capsid. Upon virion binding to target cell, a signaling cascade is triggered to disrupt the interaction with the capsid, thereby preparing capsid uncoating. This Saimiriine herpesvirus 2 (strain 11) (SaHV-2) protein is Cytoplasmic envelopment protein 2 (33).